The primary structure comprises 536 residues: CTP synthase (536 aa).

The tract at residues 1–268 is amidoligase domain; it reads MKSKFIFITG…GKVLCKLFNI (268 aa). A CTP-binding site is contributed by S14. S14 provides a ligand contact to UTP. 15–20 provides a ligand contact to ATP; it reads SLGKGL. Y55 is an L-glutamine binding site. ATP is bound at residue D72. 2 residues coordinate Mg(2+): D72 and E142. CTP contacts are provided by residues 149–151, 189–194, and K225; these read DIE and KTKPMQ. UTP-binding positions include 189–194 and K225; that span reads KTKPMQ. The 243-residue stretch at 293 to 535 folds into the Glutamine amidotransferase type-1 domain; that stretch reads TIALVGKYVE…IKAAVDNKIN (243 aa). G356 provides a ligand contact to L-glutamine. C383 functions as the Nucleophile; for glutamine hydrolysis in the catalytic mechanism. Residues 384–387, E407, and R463 each bind L-glutamine; that span reads LGMQ. Catalysis depends on residues H508 and E510.

It belongs to the CTP synthase family. In terms of assembly, homotetramer.

It carries out the reaction UTP + L-glutamine + ATP + H2O = CTP + L-glutamate + ADP + phosphate + 2 H(+). The catalysed reaction is L-glutamine + H2O = L-glutamate + NH4(+). It catalyses the reaction UTP + NH4(+) + ATP = CTP + ADP + phosphate + 2 H(+). The protein operates within pyrimidine metabolism; CTP biosynthesis via de novo pathway; CTP from UDP: step 2/2. Its activity is regulated as follows. Allosterically activated by GTP, when glutamine is the substrate; GTP has no effect on the reaction when ammonia is the substrate. The allosteric effector GTP functions by stabilizing the protein conformation that binds the tetrahedral intermediate(s) formed during glutamine hydrolysis. Inhibited by the product CTP, via allosteric rather than competitive inhibition. Catalyzes the ATP-dependent amination of UTP to CTP with either L-glutamine or ammonia as the source of nitrogen. Regulates intracellular CTP levels through interactions with the four ribonucleotide triphosphates. This Treponema denticola (strain ATCC 35405 / DSM 14222 / CIP 103919 / JCM 8153 / KCTC 15104) protein is CTP synthase.